We begin with the raw amino-acid sequence, 165 residues long: Ribosome maturation factor RimM (165 aa).

The 72-residue stretch at 94–165 (EDEFYIADLT…YVILNYQREA (72 aa)) folds into the PRC barrel domain.

It belongs to the RimM family. In terms of assembly, binds ribosomal protein uS19.

The protein resides in the cytoplasm. In terms of biological role, an accessory protein needed during the final step in the assembly of 30S ribosomal subunit, possibly for assembly of the head region. Essential for efficient processing of 16S rRNA. May be needed both before and after RbfA during the maturation of 16S rRNA. It has affinity for free ribosomal 30S subunits but not for 70S ribosomes. The chain is Ribosome maturation factor RimM from Rickettsia rickettsii (strain Sheila Smith).